The following is a 503-amino-acid chain: MDFSIKGCDWSKGTANGFLTGKSDCIVLGVFEAQTLSGAALDIDEATKGLVSRVIKAGDIDGKLGKTLFLHEVSGIGASRVLLVGLGRQDAFSQKAYGDAAKVAWRALLGTKVVQVTFTLAQLPVPERASDWGVRAAILALRNETYKFTQMKSKPDAGAPALKRVVFSVDPADDKAAKVAAKQAVALANGMDLTRDLGNLPGNVCTPTYLANTAKKIAKDWGLKVDVLGLKQIQALKMGSFLSVAKGSVEPPQFIVLQYRGAAAKAAPVVLVGKGITFDSGGISLKPGEGMDEMKYDMCGAGSVLGTMRAVAEMGLKVNVVAIVPTCENMPAGNANKPGDIVTSMKGLTIEVLNTDAEGRLILCDALTYAERFKPAAVIDVATLTGACIIALGHHNTGLFSKDDALAGELLDASREAGDPAWRLPLDDEYQDQLKSNFADLANIGGRPAGSVTAACFLSRFAENYPWAHLDIAGTAWKSGAAKGATGRPVPLLAQFLIDRAGA.

The Mn(2+) site is built by K274 and D279. K286 is an active-site residue. Mn(2+) contacts are provided by D297, D356, and E358. R360 is a catalytic residue.

Belongs to the peptidase M17 family. Mn(2+) serves as cofactor.

The protein resides in the cytoplasm. It carries out the reaction Release of an N-terminal amino acid, Xaa-|-Yaa-, in which Xaa is preferably Leu, but may be other amino acids including Pro although not Arg or Lys, and Yaa may be Pro. Amino acid amides and methyl esters are also readily hydrolyzed, but rates on arylamides are exceedingly low.. The enzyme catalyses Release of an N-terminal amino acid, preferentially leucine, but not glutamic or aspartic acids.. Its function is as follows. Presumably involved in the processing and regular turnover of intracellular proteins. Catalyzes the removal of unsubstituted N-terminal amino acids from various peptides. This chain is Probable cytosol aminopeptidase, found in Burkholderia mallei (strain SAVP1).